We begin with the raw amino-acid sequence, 244 residues long: Probable cytokinin riboside 5'-monophosphate phosphoribohydrolase LOGL2 (244 aa).

Substrate-binding positions include Glu91, Arg109–Lys110, and Gly126–Glu132.

It belongs to the LOG family.

It carries out the reaction N(6)-(dimethylallyl)adenosine 5'-phosphate + H2O = N(6)-dimethylallyladenine + D-ribose 5-phosphate. The enzyme catalyses 9-ribosyl-trans-zeatin 5'-phosphate + H2O = trans-zeatin + D-ribose 5-phosphate. Its function is as follows. Cytokinin-activating enzyme working in the direct activation pathway. Phosphoribohydrolase that converts inactive cytokinin nucleotides to the biologically active free-base forms. This chain is Probable cytokinin riboside 5'-monophosphate phosphoribohydrolase LOGL2 (LOGL2), found in Oryza sativa subsp. japonica (Rice).